The primary structure comprises 178 residues: N-alpha-acetyltransferase 20 (178 aa).

In terms of domain architecture, N-acetyltransferase spans 2–157 (TTLRAFTCDD…DAYDMRKALS (156 aa)).

It belongs to the acetyltransferase family. ARD1 subfamily. Component of the N-terminal acetyltransferase B (NatB) complex which is composed of naa20 and naa25.

It is found in the cytoplasm. The protein resides in the nucleus. The enzyme catalyses N-terminal L-methionyl-L-asparaginyl-[protein] + acetyl-CoA = N-terminal N(alpha)-acetyl-L-methionyl-L-asparaginyl-[protein] + CoA + H(+). The catalysed reaction is N-terminal L-methionyl-L-glutaminyl-[protein] + acetyl-CoA = N-terminal N(alpha)-acetyl-L-methionyl-L-glutaminyl-[protein] + CoA + H(+). It carries out the reaction N-terminal L-methionyl-L-aspartyl-[protein] + acetyl-CoA = N-terminal N(alpha)-acetyl-L-methionyl-L-aspartyl-[protein] + CoA + H(+). It catalyses the reaction N-terminal L-methionyl-L-glutamyl-[protein] + acetyl-CoA = N-terminal N(alpha)-acetyl-L-methionyl-L-glutamyl-[protein] + CoA + H(+). Functionally, catalytic subunit of the NatB complex which catalyzes acetylation of the N-terminal methionine residues of peptides beginning with Met-Asp, Met-Glu, Met-Asn and Met-Gln. Proteins with cell cycle functions are overrepresented in the pool of NatB substrates. Required for maintaining the structure and function of actomyosin fibers and for proper cellular migration. The chain is N-alpha-acetyltransferase 20 (naa20) from Danio rerio (Zebrafish).